The following is a 222-amino-acid chain: N-(5'-phosphoribosyl)anthranilate isomerase (222 aa).

This sequence belongs to the TrpF family.

It carries out the reaction N-(5-phospho-beta-D-ribosyl)anthranilate = 1-(2-carboxyphenylamino)-1-deoxy-D-ribulose 5-phosphate. It participates in amino-acid biosynthesis; L-tryptophan biosynthesis; L-tryptophan from chorismate: step 3/5. In Xanthomonas campestris pv. campestris (strain 8004), this protein is N-(5'-phosphoribosyl)anthranilate isomerase.